Here is a 281-residue protein sequence, read N- to C-terminus: Probable splicing factor, arginine/serine-rich 2 (281 aa).

In terms of domain architecture, RRM 1 spans 2–72 (VRVYIGRLPN…ERVILEFPRR (71 aa)). 2 stretches are compositionally biased toward basic and acidic residues: residues 78–97 (EERS…KGGE) and 168–190 (KLQG…DRSR). 2 disordered regions span residues 78 to 100 (EERS…ERQF) and 168 to 281 (KLQG…SASP). One can recognise an RRM 2 domain in the interval 112 to 186 (FRLVIDNLST…RKLKCTDETR (75 aa)). Residues 191-215 (SRSPRRRSRSRSPTRSRSPPARRRS) are compositionally biased toward basic residues. A compositionally biased stretch (basic and acidic residues) spans 216-225 (PGSDRSDRKS). The segment covering 245 to 254 (RSRSGGRRSR) has biased composition (basic residues).

It belongs to the splicing factor SR family. In terms of processing, extensively phosphorylated on serine residues in the RS domain.

The protein resides in the nucleus. Plays a functionally redundant role in spermatogenesis and growth rate control. Required for the development of somatic gonad structures and for progression from larval stage to adulthood. The chain is Probable splicing factor, arginine/serine-rich 2 (rsp-2) from Caenorhabditis elegans.